Consider the following 147-residue polypeptide: Small ribosomal subunit protein bS18 (147 aa).

The protein belongs to the bacterial ribosomal protein bS18 family. In terms of assembly, part of the 30S ribosomal subunit. Forms a tight heterodimer with protein bS6.

Binds as a heterodimer with protein bS6 to the central domain of the 16S rRNA, where it helps stabilize the platform of the 30S subunit. The protein is Small ribosomal subunit protein bS18 of Dehalococcoides mccartyi (strain ATCC BAA-2100 / JCM 16839 / KCTC 5957 / BAV1).